The sequence spans 128 residues: Aspartate 1-decarboxylase (128 aa).

Ser25 serves as the catalytic Schiff-base intermediate with substrate; via pyruvic acid. Residue Ser25 is modified to Pyruvic acid (Ser). Thr57 lines the substrate pocket. Tyr58 (proton donor) is an active-site residue. 73-75 (GSA) lines the substrate pocket.

Belongs to the PanD family. Heterooctamer of four alpha and four beta subunits. Pyruvate serves as cofactor. Post-translationally, is synthesized initially as an inactive proenzyme, which is activated by self-cleavage at a specific serine bond to produce a beta-subunit with a hydroxyl group at its C-terminus and an alpha-subunit with a pyruvoyl group at its N-terminus.

Its subcellular location is the cytoplasm. The catalysed reaction is L-aspartate + H(+) = beta-alanine + CO2. The protein operates within cofactor biosynthesis; (R)-pantothenate biosynthesis; beta-alanine from L-aspartate: step 1/1. Catalyzes the pyruvoyl-dependent decarboxylation of aspartate to produce beta-alanine. This Burkholderia cenocepacia (strain ATCC BAA-245 / DSM 16553 / LMG 16656 / NCTC 13227 / J2315 / CF5610) (Burkholderia cepacia (strain J2315)) protein is Aspartate 1-decarboxylase.